We begin with the raw amino-acid sequence, 357 residues long: Peptide chain release factor 1 (357 aa).

Q236 is subject to N5-methylglutamine. Residues 284 to 293 are compositionally biased toward basic and acidic residues; sequence RRKKDQERAN. The segment at 284 to 313 is disordered; it reads RRKKDQERANNRRKQIGSGDRSERIRTYNF.

It belongs to the prokaryotic/mitochondrial release factor family. Post-translationally, methylated by PrmC. Methylation increases the termination efficiency of RF1.

The protein localises to the cytoplasm. Peptide chain release factor 1 directs the termination of translation in response to the peptide chain termination codons UAG and UAA. This Rickettsia bellii (strain RML369-C) protein is Peptide chain release factor 1.